The sequence spans 183 residues: dCTP deaminase (183 aa).

Residues 106–111 (KSTYAR), 130–132 (TLE), Gln151, Tyr165, and Gln175 each bind dCTP. Catalysis depends on Glu132, which acts as the Proton donor/acceptor.

It belongs to the dCTP deaminase family. Homotrimer.

The catalysed reaction is dCTP + H2O + H(+) = dUTP + NH4(+). The protein operates within pyrimidine metabolism; dUMP biosynthesis; dUMP from dCTP (dUTP route): step 1/2. Functionally, catalyzes the deamination of dCTP to dUTP. The protein is dCTP deaminase of Acidobacterium capsulatum (strain ATCC 51196 / DSM 11244 / BCRC 80197 / JCM 7670 / NBRC 15755 / NCIMB 13165 / 161).